The chain runs to 453 residues: Homogentisate 1,2-dioxygenase (453 aa).

His-306 serves as the catalytic Proton acceptor. Fe cation-binding residues include His-349 and Glu-355. Homogentisate contacts are provided by Tyr-364 and His-385. A Fe cation-binding site is contributed by His-385.

Belongs to the homogentisate dioxygenase family. In terms of assembly, hexamer; dimer of trimers. Fe cation is required as a cofactor.

The catalysed reaction is homogentisate + O2 = 4-maleylacetoacetate + H(+). The protein operates within amino-acid degradation; L-phenylalanine degradation; acetoacetate and fumarate from L-phenylalanine: step 4/6. In terms of biological role, involved in the catabolism of homogentisate (2,5-dihydroxyphenylacetate or 2,5-OH-PhAc), a central intermediate in the degradation of phenylalanine and tyrosine. Catalyzes the oxidative ring cleavage of the aromatic ring of homogentisate to yield maleylacetoacetate. The polypeptide is Homogentisate 1,2-dioxygenase (Rhizobium etli (strain CIAT 652)).